Consider the following 165-residue polypeptide: MSHPALTQLRALRYFDAIPALEPHLRDWLLLEDSMTKRFEQQGKRVSVTLIREAFVGQSEVEEASGLLPSEARYWLREILLCADGEPWLAGRTVVPESTLCGPEQVLQHLGRTPLGRYLFTSSTLTRDFIEIGRDATLWGRRSRLRLSGKPLLLTELFLPASPLY.

Substrate-binding residues include Met35, Arg77, Leu115, and Glu156.

This sequence belongs to the UbiC family. As to quaternary structure, monomer.

Its subcellular location is the cytoplasm. It catalyses the reaction chorismate = 4-hydroxybenzoate + pyruvate. It participates in cofactor biosynthesis; ubiquinone biosynthesis. In terms of biological role, removes the pyruvyl group from chorismate, with concomitant aromatization of the ring, to provide 4-hydroxybenzoate (4HB) for the ubiquinone pathway. The chain is Chorismate pyruvate-lyase from Salmonella arizonae (strain ATCC BAA-731 / CDC346-86 / RSK2980).